A 308-amino-acid chain; its full sequence is Prephenate dehydratase (308 aa).

In terms of domain architecture, Prephenate dehydratase spans 3–187 (RITYLGPEGT…AHTRFVLVGR (185 aa)). Positions 201 to 278 (SVVLGLGNVP…EDVRYLGSWP (78 aa)) constitute an ACT domain.

Homodimer.

The enzyme catalyses prephenate + H(+) = 3-phenylpyruvate + CO2 + H2O. It functions in the pathway amino-acid biosynthesis; L-phenylalanine biosynthesis; phenylpyruvate from prephenate: step 1/1. The protein is Prephenate dehydratase (pheA) of Mycobacteroides abscessus (strain ATCC 19977 / DSM 44196 / CCUG 20993 / CIP 104536 / JCM 13569 / NCTC 13031 / TMC 1543 / L948) (Mycobacterium abscessus).